Consider the following 200-residue polypeptide: dTTP/UTP pyrophosphatase (200 aa).

Asp81 functions as the Proton acceptor in the catalytic mechanism.

This sequence belongs to the Maf family. YhdE subfamily. Requires a divalent metal cation as cofactor.

It is found in the cytoplasm. The catalysed reaction is dTTP + H2O = dTMP + diphosphate + H(+). It carries out the reaction UTP + H2O = UMP + diphosphate + H(+). Functionally, nucleoside triphosphate pyrophosphatase that hydrolyzes dTTP and UTP. May have a dual role in cell division arrest and in preventing the incorporation of modified nucleotides into cellular nucleic acids. The polypeptide is dTTP/UTP pyrophosphatase (Cupriavidus pinatubonensis (strain JMP 134 / LMG 1197) (Cupriavidus necator (strain JMP 134))).